We begin with the raw amino-acid sequence, 509 residues long: MVDGVMILPVLVMIAFPFPSMEDEKPKVNPKLYMCVCEGLSCGDEAHCEGQQCFSSLSINDGFHVYQKGCFQVYEQGKMTCKTPPSPGQAVECCQGDWCNRNITAQLPTKGKSFPGTQNFHLEVGLIILSVVFAVCLLACLLGVALRKFKRRNQERLNPRDVEYGTIEGLITTNVGDSTLADLLDHSCTSGSGSGLPFLVQRTVARQITLLECVGKGRYGEVWRGSWQGENVAVKIFSSRDEKSWFRETELYNTVMLRHENILGFIASDMTSRHSSTQLWLITHYHEMGSLYDYLQLTTLDTVSCLRIVLSIASGLAHLHIEIFGTQGKPAIAHRDLKSKNILVKKNGQCCIADLGLAVMHSQSTNQLDVGNNPRVGTKRYMAPEVLDETIQVDCFDSYKRVDIWAFGLVLWEVARRMVSNGIVEDYKPPFYDVVPNDPSFEDMRKVVCVDQQRPNIPNRWFSDPTLTSLAKLMKECWYQNPSARLTALRIKKTLTKIDNSLDKLKTDC.

Positions 1-20 (MVDGVMILPVLVMIAFPFPS) are cleaved as a signal peptide. The Extracellular segment spans residues 21-123 (MEDEKPKVNP…FPGTQNFHLE (103 aa)). Asparagine 102 is a glycosylation site (N-linked (GlcNAc...) asparagine). The chain crosses the membrane as a helical span at residues 124–146 (VGLIILSVVFAVCLLACLLGVAL). Residues 147-509 (RKFKRRNQER…NSLDKLKTDC (363 aa)) lie on the Cytoplasmic side of the membrane. The region spanning 178 to 207 (STLADLLDHSCTSGSGSGLPFLVQRTVARQ) is the GS domain. The Protein kinase domain occupies 208–502 (ITLLECVGKG…KTLTKIDNSL (295 aa)). ATP is bound by residues 214-222 (VGKGRYGEV) and lysine 235. The Proton acceptor role is filled by aspartate 336. Phosphoserine is present on serine 501.

Belongs to the protein kinase superfamily. TKL Ser/Thr protein kinase family. TGFB receptor subfamily. As to quaternary structure, interacts with FKBP1A. Interacts with FCHO1. Interacts with CLU. Interacts with type II receptors AMHR2 and ACVR2A. Interacts with BMP7. Interacts with BMP9. Interacts with BMP6 (when glycosylated); the interaction may induce HAMP expression. Interacts with TSC22D1/TSC-22. Mg(2+) serves as cofactor. The cofactor is Mn(2+).

The protein localises to the membrane. The catalysed reaction is L-threonyl-[receptor-protein] + ATP = O-phospho-L-threonyl-[receptor-protein] + ADP + H(+). It carries out the reaction L-seryl-[receptor-protein] + ATP = O-phospho-L-seryl-[receptor-protein] + ADP + H(+). In terms of biological role, bone morphogenetic protein (BMP) type I receptor that is involved in a wide variety of biological processes, including bone, heart, cartilage, nervous, and reproductive system development and regulation. As a type I receptor, forms heterotetrameric receptor complexes with the type II receptors AMHR2, ACVR2A ors ACVR2B. Upon binding of ligands such as BMP7 or BMP9 to the heteromeric complexes, type II receptors transphosphorylate ACVR1 intracellular domain. In turn, ACVR1 kinase domain is activated and subsequently phosphorylates SMAD1/5/8 proteins that transduce the signal. In addition to its role in mediating BMP pathway-specific signaling, suppresses TGFbeta/activin pathway signaling by interfering with the binding of activin to its type II receptor. Besides canonical SMAD signaling, can activate non-canonical signaling pathways. May promote the expression of HAMP, potentially via its interaction with BMP6. The sequence is that of Activin receptor type-1 (ACVR1) from Bos taurus (Bovine).